We begin with the raw amino-acid sequence, 217 residues long: Probable GTP-binding protein EngB (217 aa).

Residues 37-214 enclose the EngB-type G domain; sequence SGLEVAFAGR…RAAMARLIGD (178 aa). GTP contacts are provided by residues 45–52, 72–76, 92–95, 159–162, and 193–195; these read GRSNVGKS, GRTQE, DMPG, TKAD, and TSS. 2 residues coordinate Mg(2+): Ser-52 and Thr-74.

It belongs to the TRAFAC class TrmE-Era-EngA-EngB-Septin-like GTPase superfamily. EngB GTPase family. The cofactor is Mg(2+).

Its function is as follows. Necessary for normal cell division and for the maintenance of normal septation. The sequence is that of Probable GTP-binding protein EngB from Nitrobacter winogradskyi (strain ATCC 25391 / DSM 10237 / CIP 104748 / NCIMB 11846 / Nb-255).